We begin with the raw amino-acid sequence, 807 residues long: Leucine--tRNA ligase (807 aa).

Positions 40–51 match the 'HIGH' region motif; that stretch reads PYPSGTGLHVGH. A 'KMSKS' region motif is present at residues 576-580; the sequence is KMSKS. Position 579 (Lys-579) interacts with ATP.

This sequence belongs to the class-I aminoacyl-tRNA synthetase family.

It localises to the cytoplasm. It carries out the reaction tRNA(Leu) + L-leucine + ATP = L-leucyl-tRNA(Leu) + AMP + diphosphate. This is Leucine--tRNA ligase from Pelodictyon phaeoclathratiforme (strain DSM 5477 / BU-1).